Reading from the N-terminus, the 283-residue chain is MKIISDIQELRDHLRGQNRASFVPTMGNLHEGHLSLMRLARQHGDPVVASIFVNRLQFGPNEDFDSYPRTMQADIDKLEKEGVYILFAPTERDLYPQPQEYRVDPPQQLGDILEGEFRPGFFKGVCTVVLKLFSCVQPKVAVFGKKDYQQLMIIHQMAKQFALPVEIIPGETIRAEDGLALSSRNGYLSAEERAEAPELIKALKEVRQRVLDSNIRDAKTISEIEKLAVASLAGRGWKLDYIAIRQQSNLAPASNEQLQAGDPLVILTAAKLGKTRLIDNLEI.

Position 26-33 (26-33) interacts with ATP; that stretch reads MGNLHEGH. Histidine 33 (proton donor) is an active-site residue. Residue glutamine 57 participates in (R)-pantoate binding. Glutamine 57 lines the beta-alanine pocket. 144 to 147 serves as a coordination point for ATP; the sequence is GKKD. Position 150 (glutamine 150) interacts with (R)-pantoate. ATP-binding positions include isoleucine 173 and 181–184; that span reads LSSR.

It belongs to the pantothenate synthetase family. Homodimer.

The protein localises to the cytoplasm. The catalysed reaction is (R)-pantoate + beta-alanine + ATP = (R)-pantothenate + AMP + diphosphate + H(+). Its pathway is cofactor biosynthesis; (R)-pantothenate biosynthesis; (R)-pantothenate from (R)-pantoate and beta-alanine: step 1/1. Functionally, catalyzes the condensation of pantoate with beta-alanine in an ATP-dependent reaction via a pantoyl-adenylate intermediate. The protein is Pantothenate synthetase of Polynucleobacter necessarius subsp. necessarius (strain STIR1).